The sequence spans 469 residues: Glutamine synthetase (469 aa).

The GS beta-grasp domain maps to Lys13–Thr97. The GS catalytic domain occupies Pro105–Leu469. Mg(2+) contacts are provided by Glu130 and Glu132. Glu208 contacts ATP. The Mg(2+) site is built by Glu213 and Glu221. L-glutamate-binding positions include Asn265–Gly266 and Gly266. A Mg(2+)-binding site is contributed by His270. Residues His272–Ser274 and Ser274 each bind ATP. L-glutamate contacts are provided by Arg322, Glu328, and Arg340. The ATP site is built by Arg340, Arg345, and Lys353. Position 358 (Glu358) interacts with Mg(2+). Residue Arg360 coordinates L-glutamate. At Tyr398 the chain carries O-AMP-tyrosine.

This sequence belongs to the glutamine synthetase family. In terms of assembly, oligomer of 12 subunits arranged in the form of two hexameric ring. The cofactor is Mg(2+).

Its subcellular location is the cytoplasm. It carries out the reaction L-glutamate + NH4(+) + ATP = L-glutamine + ADP + phosphate + H(+). With respect to regulation, the activity of this enzyme could be controlled by adenylation under conditions of abundant glutamine. Its function is as follows. Catalyzes the ATP-dependent biosynthesis of glutamine from glutamate and ammonia. The protein is Glutamine synthetase of Methylococcus capsulatus (strain ATCC 33009 / NCIMB 11132 / Bath).